A 207-amino-acid polypeptide reads, in one-letter code: Small ribosomal subunit protein uS4 (207 aa).

The tract at residues 31 to 55 (KCKLDSKPGQHGRTSGARTSDYGTQ) is disordered. Residues 42–53 (GRTSGARTSDYG) are compositionally biased toward polar residues. Positions 97-160 (SRLDNVVYRM…KKQARIIEAL (64 aa)) constitute an S4 RNA-binding domain.

It belongs to the universal ribosomal protein uS4 family. Part of the 30S ribosomal subunit. Contacts protein S5. The interaction surface between S4 and S5 is involved in control of translational fidelity.

One of the primary rRNA binding proteins, it binds directly to 16S rRNA where it nucleates assembly of the body of the 30S subunit. Its function is as follows. With S5 and S12 plays an important role in translational accuracy. The chain is Small ribosomal subunit protein uS4 from Burkholderia multivorans (strain ATCC 17616 / 249).